The primary structure comprises 154 residues: Large ribosomal subunit protein uL13 (154 aa).

Belongs to the universal ribosomal protein uL13 family. As to quaternary structure, part of the 50S ribosomal subunit.

Its function is as follows. This protein is one of the early assembly proteins of the 50S ribosomal subunit, although it is not seen to bind rRNA by itself. It is important during the early stages of 50S assembly. This chain is Large ribosomal subunit protein uL13, found in Brucella abortus (strain S19).